The sequence spans 376 residues: Transcription initiation factor IIA subunit 1 (376 aa).

A2 carries the post-translational modification N-acetylalanine. 2 stretches are compositionally biased toward low complexity: residues 69–79 (QVQQQHQPQQQ) and 89–105 (QAQP…TQQV). Disordered stretches follow at residues 69–107 (QVQQ…QVLI), 247–266 (QAQI…AQTQ), and 274–329 (DGTG…QELF). S280, S281, S316, and S321 each carry phosphoserine; by TAF1. Acidic residues predominate over residues 280–329 (SSEEDEDEEEDYDDDEEEDKEKDGAEDGQVEEEPLNSEDDVSDEEGQELF). 2 residues coordinate DNA: H343 and R344.

Belongs to the TFIIA subunit 1 family. As to quaternary structure, TFIIA is a heterodimer of the large unprocessed subunit 1 and a small subunit gamma. It was originally believed to be a heterotrimer of an alpha (p35), a beta (p19) and a gamma subunit (p12). TFIIA forms a complex with TBP. Part of TBP-based Pol II pre-initiation complex (PIC), in which Pol II core assembles with general transcription factors and other specific initiation factors including GTF2E1, GTF2E2, GTF2F1, GTF2F2, TCEA1, ERCC2, ERCC3, GTF2H2, GTF2H3, GTF2H4, GTF2H5, GTF2A1, GTF2A2, GTF2B and TBP; this large multi-subunit PIC complex mediates DNA unwinding and targets Pol II core to the transcription start site where the first phosphodiester bond forms. The alpha and beta subunits are postranslationally produced from the precursor form by TASP1. The cleavage promotes proteasomal degradation.

The protein localises to the nucleus. Functionally, TFIIA is a component of the transcription machinery of RNA polymerase II and plays an important role in transcriptional activation. TFIIA in a complex with TBP mediates transcriptional activity. This chain is Transcription initiation factor IIA subunit 1 (GTF2A1), found in Homo sapiens (Human).